A 215-amino-acid chain; its full sequence is 3-demethoxyubiquinol 3-hydroxylase (215 aa).

Residues Glu-64, Glu-94, His-97, Glu-146, Glu-178, and His-181 each coordinate Fe cation.

The protein belongs to the COQ7 family. Requires Fe cation as cofactor.

It localises to the cell membrane. It catalyses the reaction a 5-methoxy-2-methyl-3-(all-trans-polyprenyl)benzene-1,4-diol + AH2 + O2 = a 3-demethylubiquinol + A + H2O. The protein operates within cofactor biosynthesis; ubiquinone biosynthesis. Functionally, catalyzes the hydroxylation of 2-nonaprenyl-3-methyl-6-methoxy-1,4-benzoquinol during ubiquinone biosynthesis. The protein is 3-demethoxyubiquinol 3-hydroxylase of Stutzerimonas stutzeri (strain A1501) (Pseudomonas stutzeri).